Here is a 248-residue protein sequence, read N- to C-terminus: Peptidyl-tRNA hydrolase (248 aa).

Tyr-14 is a binding site for tRNA. The Proton acceptor role is filled by His-19. Positions 64, 66, and 112 each coordinate tRNA. Residues 190 to 248 are disordered; that stretch reads PRSSTGEASKGRKKAQKSEPGVAKTPAKAATPEAPAAGDIPAAPEDSRSPMQKLLDKFK. Low complexity predominate over residues 212-226; it reads AKTPAKAATPEAPAA.

The protein belongs to the PTH family. Monomer.

The protein resides in the cytoplasm. It carries out the reaction an N-acyl-L-alpha-aminoacyl-tRNA + H2O = an N-acyl-L-amino acid + a tRNA + H(+). Hydrolyzes ribosome-free peptidyl-tRNAs (with 1 or more amino acids incorporated), which drop off the ribosome during protein synthesis, or as a result of ribosome stalling. Its function is as follows. Catalyzes the release of premature peptidyl moieties from peptidyl-tRNA molecules trapped in stalled 50S ribosomal subunits, and thus maintains levels of free tRNAs and 50S ribosomes. The sequence is that of Peptidyl-tRNA hydrolase from Ruegeria sp. (strain TM1040) (Silicibacter sp.).